The following is a 142-amino-acid chain: uncharacterized protein (142 aa).

The Peptidase C39 domain occupies 18–137 (QSRSYSCGPA…RIFTGNVLVV (120 aa)).

This is an uncharacterized protein from Methanothermobacter thermautotrophicus (strain ATCC 29096 / DSM 1053 / JCM 10044 / NBRC 100330 / Delta H) (Methanobacterium thermoautotrophicum).